Reading from the N-terminus, the 667-residue chain is YTH domain-containing protein ECT2 (667 aa).

Disordered stretches follow at residues 264–305 and 379–398; these read QRPV…PSSV and NELN…GNLD. Residues 267–285 are compositionally biased toward low complexity; that stretch reads VSGSGVASSYSKSSTVPSS. Positions 286-305 are enriched in polar residues; it reads RNQNYRSNSHYTSVHQPSSV. The 138-residue stretch at 442 to 579 folds into the YTH domain; the sequence is AMFFIIKSYS…EQGLKIVKIF (138 aa). RNA is bound by residues 448–450, D454, 464–465, N497, W521, W526, and W534; these read KSY and WA. The disordered stretch occupies residues 606 to 667; it reads KAKQTQKQVS…VTGDVVANGC (62 aa). The span at 614 to 627 shows a compositional bias: basic and acidic residues; that stretch reads VSEEKVTDEKKESA. Over residues 628 to 639 the composition is skewed to low complexity; that stretch reads TAESASKESPAA.

Interacts (via C-terminus) with CIPK1. In terms of tissue distribution, expressed in the shoot apex, at the sites of leaf formation, and in emerging leaves. Highly expressed in rapidly developing tissues.

Its subcellular location is the cytoplasm. The protein resides in the nucleus. In terms of biological role, specifically recognizes and binds N6-methyladenosine (m6A)-containing RNAs, and regulates mRNA stability. M6A is a modification present at internal sites of mRNAs and some non-coding RNAs and plays a role in mRNA stability and processing. Binds preferentially in the 3'UTRs of target genes. May play dual roles in regulating 3'UTR processing in the nucleus and facilitating mRNA stability in the cytoplasm. Required for the correct timing of leaf formation and normal leaf morphology. Functions redundantly with ECT3. Required for proper trichome branching and morphology. Controls trichome morphology by binding transcripts related to trichome morphogenesis and affecting their stability. The polypeptide is YTH domain-containing protein ECT2 (Arabidopsis thaliana (Mouse-ear cress)).